The following is a 963-amino-acid chain: SH3 domain-binding protein 4 (963 aa).

The SH3 1 domain maps to 55 to 114 (GNAKEVIAIKDYCPTNFTTLKFSKGDHLYVLDTSGGEWWYAHNTTEMGYIPSSYVQPLNY). Ser131, Ser246, Ser251, Ser279, and Ser296 each carry phosphoserine. One can recognise a ZU5 domain in the interval 317-454 (TNIVCKLDSS…LEPCMYVAVV (138 aa)). Ser637 carries the phosphoserine modification. An SH3 2 domain is found at 654 to 724 (SSLKFGKLLK…HTKNVLVVGR (71 aa)).

As to quaternary structure, homodimer or homooligomer. Interacts with DNM2, EPS15, clathrin, the adapter protein complex 2/AP-2 and TFRC. Interacts with the Rag GTPases RRAGA, RRAGB, RRAGC and RRAGD; the interaction is most probably direct, preferentially occurs with their inactive GDP-bound form and is negatively regulated by amino acids. In terms of assembly, (Microbial infection) Interacts with molluscum contagiosum virus protein MC159L; this interaction is important for the suppression of autophagy. Post-translationally, phosphorylated upon EGF stimulation. Phosphorylation prevents interaction with DNM2. Expressed in all tissues tested with higher expression in pancreas. Expressed by retinal pigment epithelial cells (at protein level).

Its subcellular location is the membrane. The protein localises to the clathrin-coated pit. It localises to the cytoplasmic vesicle. The protein resides in the clathrin-coated vesicle. It is found in the nucleus. Functionally, may function in transferrin receptor internalization at the plasma membrane through a cargo-specific control of clathrin-mediated endocytosis. Alternatively, may act as a negative regulator of the amino acid-induced TOR signaling by inhibiting the formation of active Rag GTPase complexes. Preferentially binds inactive Rag GTPase complexes and prevents their interaction with the mTORC1 complex inhibiting its relocalization to lysosomes and its activation. Thereby, may indirectly regulate cell growth, proliferation and autophagy. This chain is SH3 domain-binding protein 4 (SH3BP4), found in Homo sapiens (Human).